The sequence spans 187 residues: UPF0301 protein HSM_1900 (187 aa).

It belongs to the UPF0301 (AlgH) family.

This chain is UPF0301 protein HSM_1900, found in Histophilus somni (strain 2336) (Haemophilus somnus).